Here is a 530-residue protein sequence, read N- to C-terminus: Probable serine/threonine-protein kinase fnkB (530 aa).

The Protein kinase domain occupies 11-268 (WEIVETLKSN…SITLIDHPFL (258 aa)). ATP is bound by residues 17–25 (LKSNVFKVN) and Lys-43. Asp-131 (proton acceptor) is an active-site residue.

Belongs to the protein kinase superfamily. STE Ser/Thr protein kinase family. Mg(2+) is required as a cofactor.

The catalysed reaction is L-seryl-[protein] + ATP = O-phospho-L-seryl-[protein] + ADP + H(+). The enzyme catalyses L-threonyl-[protein] + ATP = O-phospho-L-threonyl-[protein] + ADP + H(+). The sequence is that of Probable serine/threonine-protein kinase fnkB from Dictyostelium discoideum (Social amoeba).